The primary structure comprises 584 residues: A-type ATP synthase subunit A (584 aa).

233–240 (GPFGSGKT) contacts ATP.

It belongs to the ATPase alpha/beta chains family. In terms of assembly, has multiple subunits with at least A(3), B(3), C, D, E, F, H, I and proteolipid K(x).

The protein resides in the cell membrane. The enzyme catalyses ATP + H2O + 4 H(+)(in) = ADP + phosphate + 5 H(+)(out). Functionally, component of the A-type ATP synthase that produces ATP from ADP in the presence of a proton gradient across the membrane. The A chain is the catalytic subunit. This Methanothermobacter thermautotrophicus (strain ATCC 29096 / DSM 1053 / JCM 10044 / NBRC 100330 / Delta H) (Methanobacterium thermoautotrophicum) protein is A-type ATP synthase subunit A.